A 320-amino-acid chain; its full sequence is MACENNLVVKQIMDLYNQISNLESLKPSKNVDTLFRQLVSTCLPTDTNIDVTEIHDEKVKDMRSHLIKLCGEAEGYLEQHFSAILGSFEDNPLNHLHIFPYYNNYLKLGKLEFDLLSQHTTHVPTKVAFIGSGPMPLTSIVLAKFHLPNTTFHNFDIDSHANTLASNLVSRDSDLSKRMIFHTTDVLNAKEGLDQYDVVFLAALVGMDKESKVKAIEHLEKHMAPGAVVMLRSAHGLRAFLYPIVDSCDLKGFEVLTIYHPSDDVVNSVVIARKLGGSNGARGSQIGRCVVMPCNCSKVHAILNNRGMEKNLIEEYSAIE.

This sequence belongs to the nicotianamine synthase (NAS)-like family.

The enzyme catalyses 3 S-adenosyl-L-methionine = nicotianamine + 3 S-methyl-5'-thioadenosine + 3 H(+). In terms of biological role, synthesizes nicotianamine, a polyamine which serves as a sensor for the physiological iron status within the plant, and/or might be involved in the transport of iron. This is Nicotianamine synthase 2 (NAS2) from Arabidopsis thaliana (Mouse-ear cress).